A 472-amino-acid chain; its full sequence is Ribosomal RNA small subunit methyltransferase F (472 aa).

S-adenosyl-L-methionine-binding positions include 123–129 (AAAPGSK), glutamate 147, aspartate 174, and aspartate 192. Catalysis depends on cysteine 245, which acts as the Nucleophile.

It belongs to the class I-like SAM-binding methyltransferase superfamily. RsmB/NOP family.

The protein resides in the cytoplasm. The catalysed reaction is cytidine(1407) in 16S rRNA + S-adenosyl-L-methionine = 5-methylcytidine(1407) in 16S rRNA + S-adenosyl-L-homocysteine + H(+). In terms of biological role, specifically methylates the cytosine at position 1407 (m5C1407) of 16S rRNA. This Vibrio vulnificus (strain CMCP6) protein is Ribosomal RNA small subunit methyltransferase F.